The chain runs to 351 residues: Phosphate acyltransferase (351 aa).

This sequence belongs to the PlsX family. As to quaternary structure, homodimer. Probably interacts with PlsY.

The protein localises to the cytoplasm. The catalysed reaction is a fatty acyl-[ACP] + phosphate = an acyl phosphate + holo-[ACP]. Its pathway is lipid metabolism; phospholipid metabolism. In terms of biological role, catalyzes the reversible formation of acyl-phosphate (acyl-PO(4)) from acyl-[acyl-carrier-protein] (acyl-ACP). This enzyme utilizes acyl-ACP as fatty acyl donor, but not acyl-CoA. This is Phosphate acyltransferase from Neisseria meningitidis serogroup C / serotype 2a (strain ATCC 700532 / DSM 15464 / FAM18).